The sequence spans 142 residues: Cell wall-binding protein YqgA (142 aa).

An N-terminal signal peptide occupies residues 1–28; it reads MKQGKFSVFLILLLMLTLVVAPKEKAEA.

As to quaternary structure, found in a complex with F(1)F(0) ATP synthase and SpoIIIJ and YqjG.

It is found in the secreted. Its subcellular location is the cell wall. In Bacillus subtilis (strain 168), this protein is Cell wall-binding protein YqgA (yqgA).